The following is a 473-amino-acid chain: ATP synthase subunit beta, chloroplastic (473 aa).

Glycine 172–threonine 179 contacts ATP.

Belongs to the ATPase alpha/beta chains family. As to quaternary structure, F-type ATPases have 2 components, CF(1) - the catalytic core - and CF(0) - the membrane proton channel. CF(1) has five subunits: alpha(3), beta(3), gamma(1), delta(1), epsilon(1). CF(0) has four main subunits: a(1), b(1), b'(1) and c(9-12).

It is found in the plastid. Its subcellular location is the chloroplast thylakoid membrane. It catalyses the reaction ATP + H2O + 4 H(+)(in) = ADP + phosphate + 5 H(+)(out). In terms of biological role, produces ATP from ADP in the presence of a proton gradient across the membrane. The catalytic sites are hosted primarily by the beta subunits. The polypeptide is ATP synthase subunit beta, chloroplastic (Equisetum arvense (Field horsetail)).